The chain runs to 213 residues: Thymidine kinase (213 aa).

Residues 22–29 and 94–97 each bind ATP; these read GSMFSGKT and DEAQ. The active-site Proton acceptor is the E95. Zn(2+) contacts are provided by C151, C154, C183, and C186. The tract at residues 185-213 is disordered; that stretch reads RCFQPPRPTSTSSLKAPAPAATAPRPELP. A compositionally biased stretch (low complexity) spans 193 to 213; sequence TSTSSLKAPAPAATAPRPELP.

The protein belongs to the thymidine kinase family. As to quaternary structure, homotetramer.

Its subcellular location is the cytoplasm. It catalyses the reaction thymidine + ATP = dTMP + ADP + H(+). This chain is Thymidine kinase, found in Rhodothermus sp. (strain ITI 518).